The chain runs to 898 residues: MVWDRQTKMEYEWKPDEQGLQQILQLLKESQSPDTTIQRTVQQKLEQLNQYPDFNNYLIFVLTKLKSEDEPTRSLSGLILKNNVKAHFQNFPNGVTDFIKSECLNNIGDSSPLIRATVGILITTIASKGELQNWPDLLPKLCSLLDSEDYNTCEGAFGALQKICEDSAEILDSDVLDRPLNIMIPKFLQFFKHSSPKIRSHAVACVNQFIISRTQALMLHIDSFIENLFALAGDEEPEVRKNVCRALVMLLEVRMDRLLPHMHNIVEYMLQRTQDQDENVALEACEFWLTLAEQPICKDVLVRHLPKLIPVLVNGMKYSDIDIILLKGDVEEDETIPDSEQDIRPRFHRSRTVAQQHDEDGIEEEDDDDDEIDDDDTISDWNLRKCSAAALDVLANVYRDELLPHILPLLKELLFHHEWVVKESGILVLGAIAEGCMQGMIPYLPELIPHLIQCLSDKKALVRSITCWTLSRYAHWVVSQPPDTYLKPLMTELLKRILDSNKRVQEAACSAFATLEEEACTELVPYLAYILDTLVFAFSKYQHKNLLILYDAIGTLADSVGHHLNKPEYIQMLMPPLIQKWNMLKDEDKDLFPLLECLSSVATALQSGFLPYCEPVYQRCVNLVQKTLAQAMLNNAQPDQYEAPDKDFMIVALDLLSGLAEGLGGNIEQLVARSNILTLMYQCMQDKMPEVRQSSFALLGDLTKACFQHVKPCIADFMPILGTNLNPEFISVCNNATWAIGEISIQMGIEMQPYIPMVLHQLVEIINRPNTPKTLLENTAITIGRLGYVCPQEVAPMLQQFIRPWCTSLRNIRDNEEKDSAFRGICTMISVNPSGVIQDFIFFCDAVASWINPKDDLRDMFCKILHGFKNQVGDENWRRFSDQFPLPLKERLAAFYGV.

An N-acetylmethionine modification is found at methionine 1. HEAT repeat units follow at residues 19 to 46 (GLQQILQLLKESQSPDTTIQRTVQQKLE), 51 to 89 (YPDFNNYLIFVLTKLKSEDEPTRSLSGLILKNNVKAHFQ), 98 to 131 (FIKSECLNNIGDSSPLIRATVGILITTIASKGEL), 137 to 174 (LLPKLCSLLDSEDYNTCEGAFGALQKICEDSAEILDSD), 181 to 211 (NIMIPKFLQFFKHSSPKIRSHAVACVNQFII), 224 to 251 (FIENLFALAGDEEPEVRKNVCRALVMLL), 263 to 290 (HNIVEYMLQRTQDQDENVALEACEFWLT), 306 to 397 (PKLI…LANV), 405 to 433 (HILPLLKELLFHHEWVVKESGILVLGAIA), 445 to 472 (PELIPHLIQCLSDKKALVRSITCWTLSR), 486 to 519 (LKPLMTELLKRILDSNKRVQEAACSAFATLEEEA), 527 to 560 (LAYILDTLVFAFSKYQHKNLLILYDAIGTLADSV), 568 to 606 (EYIQMLMPPLIQKWNMLKDEDKDLFPLLECLSSVATALQ), 614 to 665 (EPVY…GLGG), 676 to 707 (ILTLMYQCMQDKMPEVRQSSFALLGDLTKACF), 715 to 748 (ADFMPILGTNLNPEFISVCNNATWAIGEISIQMG), 756 to 791 (PMVLHQLVEIINRPNTPKTLLENTAITIGRLGYVCP), 799 to 832 (QQFIRPWCTSLRNIRDNEEKDSAFRGICTMISVN), 841 to 872 (IFFCDAVASWINPKDDLRDMFCKILHGFKNQV), and 875 to 895 (ENWRRFSDQFPLPLKERLAAF). Residues 41-109 (VQQKLEQLNQ…KSECLNNIGD (69 aa)) form the Importin N-terminal domain. The segment at 347-374 (FHRSRTVAQQHDEDGIEEEDDDDDEIDD) is disordered. Over residues 360-374 (DGIEEEDDDDDEIDD) the composition is skewed to acidic residues.

It belongs to the importin beta family. Importin beta-2 subfamily. In terms of assembly, identified in a complex that contains TNPO1, RAN and RANBP1. Binds HNRPA1, HNRPA2, HNRNPDL, RPS7, RPL5 and RAN. Interacts with H2A, H2B, H3 and H4 histones. Interacts with isoform 1 and isoform 5 of ADAR/ADAR1 (via DRBM 3 domain). Interacts with SNAI1 (via zinc fingers); the interaction mediates SNAI1 nuclear import. Interacts with SNAI2 (via zinc fingers). Interacts with RPL23A (via BIB domain) and SRP19; this interaction is involved in RPL23A and SRP19 import into the nucleus. Interacts (via HEAT repeats 8-12) with BAP1 (via non-classical PY-NLS); this interaction is direct, is involved in BAP1 nuclear import and disrupts BAP1 homodimerization. (Microbial infection) Binds to HIV-1 Rev.

Its subcellular location is the cytoplasm. The protein resides in the nucleus. Functionally, functions in nuclear protein import as nuclear transport receptor. Serves as receptor for nuclear localization signals (NLS) in cargo substrates. May mediate docking of the importin/substrate complex to the nuclear pore complex (NPC) through binding to nucleoporin and the complex is subsequently translocated through the pore by an energy requiring, Ran-dependent mechanism. At the nucleoplasmic side of the NPC, Ran binds to the importin, the importin/substrate complex dissociates and importin is re-exported from the nucleus to the cytoplasm where GTP hydrolysis releases Ran. The directionality of nuclear import is thought to be conferred by an asymmetric distribution of the GTP- and GDP-bound forms of Ran between the cytoplasm and nucleus. Involved in nuclear import of M9-containing proteins. In vitro, binds directly to the M9 region of the heterogeneous nuclear ribonucleoproteins (hnRNP), A1 and A2 and mediates their nuclear import. Involved in hnRNP A1/A2 nuclear export. Mediates the nuclear import of ribosomal proteins RPL23A, RPS7 and RPL5. In vitro, mediates nuclear import of H2A, H2B, H3 and H4 histones. In vitro, mediates nuclear import of SRP19. Mediates nuclear import of ADAR/ADAR1 isoform 1 and isoform 5 in a RanGTP-dependent manner. Main mediator of PR-DUB complex component BAP1 nuclear import; acts redundantly with the karyopherins KPNA1 and KPNA2. (Microbial infection) In case of HIV-1 infection, binds and mediates the nuclear import of HIV-1 Rev. This chain is Transportin-1 (TNPO1), found in Homo sapiens (Human).